The sequence spans 318 residues: Transaldolase (318 aa).

The active-site Schiff-base intermediate with substrate is Lys-132.

This sequence belongs to the transaldolase family. Type 1 subfamily. In terms of assembly, homodimer.

The protein localises to the cytoplasm. The catalysed reaction is D-sedoheptulose 7-phosphate + D-glyceraldehyde 3-phosphate = D-erythrose 4-phosphate + beta-D-fructose 6-phosphate. The protein operates within carbohydrate degradation; pentose phosphate pathway; D-glyceraldehyde 3-phosphate and beta-D-fructose 6-phosphate from D-ribose 5-phosphate and D-xylulose 5-phosphate (non-oxidative stage): step 2/3. Functionally, transaldolase is important for the balance of metabolites in the pentose-phosphate pathway. The polypeptide is Transaldolase (Allorhizobium ampelinum (strain ATCC BAA-846 / DSM 112012 / S4) (Agrobacterium vitis (strain S4))).